We begin with the raw amino-acid sequence, 322 residues long: Cytochrome c biogenesis protein CcsA (322 aa).

Transmembrane regions (helical) follow at residues 9–29, 43–63, 70–90, 142–162, 226–246, 259–274, and 287–307; these read ILTHICFSIILIVITIHLITL, GMIATFFCITGLLVSRWIYSG, LYESLIFLSWSFAIIHMVPKI, MLLSYAALLCGSLLSIALLVI, VISLGFTFLTIGILSGAVWAN, ETWAFITWTIFAIYSH, and AIVASMGFLIIWICYFGVNLL.

Belongs to the CcmF/CycK/Ccl1/NrfE/CcsA family. May interact with Ccs1.

The protein resides in the plastid. It localises to the chloroplast thylakoid membrane. In terms of biological role, required during biogenesis of c-type cytochromes (cytochrome c6 and cytochrome f) at the step of heme attachment. In Chloranthus spicatus (Chulantree), this protein is Cytochrome c biogenesis protein CcsA.